The primary structure comprises 494 residues: Transcriptional regulator calD (494 aa).

It is found in the nucleus. Functionally, transcription co-regulator that might be involved in the regulation of the expression of the gene cluster that mediates the biosynthesis of calbistrins and related compounds such as decumbenones. Calbistrin A is a secondary metabolite with an interesting structure that was recently found to have bioactivity against leukemia cells. It consists of two polyketides linked by an ester bond: a bicyclic decalin containing polyketide and a linear 12 carbon dioic acid structure. The sequence is that of Transcriptional regulator calD from Penicillium decumbens.